An 870-amino-acid chain; its full sequence is Probable coatomer subunit gamma (870 aa).

6 HEAT repeats span residues 60-97, 99-133, 168-205, 278-315, 316-350, and 389-425; these read TEAT…VSDD, IIVT…TGML, EVVR…NDRL, SEIQ…AHPN, AVMS…GAES, and HTVM…ENPD.

It belongs to the COPG family. As to quaternary structure, oligomeric complex that consists of at least the alpha, beta, beta', gamma, delta, epsilon and zeta subunits.

Its subcellular location is the cytoplasm. It is found in the golgi apparatus membrane. The protein resides in the cytoplasmic vesicle. The protein localises to the COPI-coated vesicle membrane. The coatomer is a cytosolic protein complex that binds to dilysine motifs and reversibly associates with Golgi non-clathrin-coated vesicles, which further mediate biosynthetic protein transport from the ER, via the Golgi up to the trans Golgi network. Coatomer complex is required for budding from Golgi membranes, and is essential for the retrograde Golgi-to-ER transport of dilysine-tagged proteins. This chain is Probable coatomer subunit gamma, found in Caenorhabditis elegans.